A 330-amino-acid polypeptide reads, in one-letter code: L-lactate dehydrogenase (330 aa).

NAD(+)-binding positions include valine 31, aspartate 52, lysine 57, and 96-97; that span reads GA. Substrate-binding positions include glutamine 99, arginine 105, and 137 to 140; that span reads NPVD. Residues 135–137 and serine 160 each bind NAD(+); that span reads VSN. Residue 165–168 participates in substrate binding; the sequence is DTAR. Beta-D-fructose 1,6-bisphosphate-binding residues include arginine 170 and histidine 185. Histidine 192 acts as the Proton acceptor in catalysis. Phosphotyrosine is present on tyrosine 238. Residue threonine 247 coordinates substrate.

It belongs to the LDH/MDH superfamily. LDH family. In terms of assembly, homotetramer.

It localises to the cytoplasm. The catalysed reaction is (S)-lactate + NAD(+) = pyruvate + NADH + H(+). It functions in the pathway fermentation; pyruvate fermentation to lactate; (S)-lactate from pyruvate: step 1/1. Its activity is regulated as follows. Allosterically activated by fructose 1,6-bisphosphate (FBP). Functionally, catalyzes the conversion of lactate to pyruvate. The polypeptide is L-lactate dehydrogenase (Gloeobacter violaceus (strain ATCC 29082 / PCC 7421)).